The following is a 43-amino-acid chain: Metallothionein-3 (43 aa).

This sequence belongs to the metallothionein superfamily. Type 5 family.

This protein binds cations of several transition elements. Thought to be involved in metal ion homeostasis. This is Metallothionein-3 (MtnC) from Drosophila melanogaster (Fruit fly).